The primary structure comprises 298 residues: Small ribosomal subunit biogenesis GTPase RsgA (298 aa).

The CP-type G domain occupies 67 to 228; it reads TNELVRPPIS…IADTPGFSSL (162 aa). Residues 116-119 and 171-179 contribute to the GTP site; these read TKMD and GQSGVGKSS. Positions 252, 257, 259, and 265 each coordinate Zn(2+).

The protein belongs to the TRAFAC class YlqF/YawG GTPase family. RsgA subfamily. Monomer. Associates with 30S ribosomal subunit, binds 16S rRNA. Zn(2+) serves as cofactor.

It localises to the cytoplasm. One of several proteins that assist in the late maturation steps of the functional core of the 30S ribosomal subunit. Helps release RbfA from mature subunits. May play a role in the assembly of ribosomal proteins into the subunit. Circularly permuted GTPase that catalyzes slow GTP hydrolysis, GTPase activity is stimulated by the 30S ribosomal subunit. The chain is Small ribosomal subunit biogenesis GTPase RsgA from Bacillus pumilus (strain SAFR-032).